We begin with the raw amino-acid sequence, 340 residues long: Glutaminase 2 (340 aa).

Residues Ser89, Asn140, Asn191, Tyr215, and Tyr267 each coordinate substrate.

This sequence belongs to the glutaminase family. Homotetramer.

It carries out the reaction L-glutamine + H2O = L-glutamate + NH4(+). In Yersinia pestis, this protein is Glutaminase 2.